The following is a 289-amino-acid chain: ATP synthase gamma chain (289 aa).

Belongs to the ATPase gamma chain family. As to quaternary structure, F-type ATPases have 2 components, CF(1) - the catalytic core - and CF(0) - the membrane proton channel. CF(1) has five subunits: alpha(3), beta(3), gamma(1), delta(1), epsilon(1). CF(0) has three main subunits: a, b and c.

It localises to the cell inner membrane. Produces ATP from ADP in the presence of a proton gradient across the membrane. The gamma chain is believed to be important in regulating ATPase activity and the flow of protons through the CF(0) complex. In Haemophilus influenzae (strain PittEE), this protein is ATP synthase gamma chain.